Reading from the N-terminus, the 297-residue chain is Vacuolar protein sorting-associated protein 26 (297 aa).

Belongs to the VPS26 family. In terms of assembly, component of the retromer complex, composed of VPS26, VPS29 and VPS35. As part of the retromer complex, interacts with the sorting receptor SORTLR/sortilin. Interacts with GTPase RAB7.

In terms of biological role, plays a role in vesicular protein sorting. Component of the membrane-associated retromer complex which is essential in endosome-to-Golgi retrograde transport. In Plasmodium falciparum (isolate 3D7), this protein is Vacuolar protein sorting-associated protein 26.